A 526-amino-acid polypeptide reads, in one-letter code: Exodeoxyribonuclease 7 large subunit (526 aa).

A disordered region spans residues 497–526; it reads AMTTEGGTPPAGAKKRSTKPAEPPKQGSLF.

This sequence belongs to the XseA family. As to quaternary structure, heterooligomer composed of large and small subunits.

It is found in the cytoplasm. It catalyses the reaction Exonucleolytic cleavage in either 5'- to 3'- or 3'- to 5'-direction to yield nucleoside 5'-phosphates.. Its function is as follows. Bidirectionally degrades single-stranded DNA into large acid-insoluble oligonucleotides, which are then degraded further into small acid-soluble oligonucleotides. In Rhizobium johnstonii (strain DSM 114642 / LMG 32736 / 3841) (Rhizobium leguminosarum bv. viciae), this protein is Exodeoxyribonuclease 7 large subunit.